A 401-amino-acid polypeptide reads, in one-letter code: Dual-specificity RNA methyltransferase RlmN (401 aa).

Catalysis depends on E114, which acts as the Proton acceptor. Residues 120–365 (DKGRGTLCVS…TMVRRTRGDD (246 aa)) form the Radical SAM core domain. C127 and C370 are disulfide-bonded. Residues C134, C138, and C141 each contribute to the [4Fe-4S] cluster site. S-adenosyl-L-methionine is bound by residues 187–188 (GE), S219, 241–243 (SLH), and N327. The active-site S-methylcysteine intermediate is the C370.

It belongs to the radical SAM superfamily. RlmN family. The cofactor is [4Fe-4S] cluster.

Its subcellular location is the cytoplasm. The catalysed reaction is adenosine(2503) in 23S rRNA + 2 reduced [2Fe-2S]-[ferredoxin] + 2 S-adenosyl-L-methionine = 2-methyladenosine(2503) in 23S rRNA + 5'-deoxyadenosine + L-methionine + 2 oxidized [2Fe-2S]-[ferredoxin] + S-adenosyl-L-homocysteine. It carries out the reaction adenosine(37) in tRNA + 2 reduced [2Fe-2S]-[ferredoxin] + 2 S-adenosyl-L-methionine = 2-methyladenosine(37) in tRNA + 5'-deoxyadenosine + L-methionine + 2 oxidized [2Fe-2S]-[ferredoxin] + S-adenosyl-L-homocysteine. In terms of biological role, specifically methylates position 2 of adenine 2503 in 23S rRNA and position 2 of adenine 37 in tRNAs. m2A2503 modification seems to play a crucial role in the proofreading step occurring at the peptidyl transferase center and thus would serve to optimize ribosomal fidelity. The polypeptide is Dual-specificity RNA methyltransferase RlmN (Xanthomonas campestris pv. campestris (strain B100)).